Here is a 509-residue protein sequence, read N- to C-terminus: MQSWSRVYCSLAKRGHFNRISHGLQGLSAVPLRTYADQPIDADVTVIGSGPGGYVAAIKAAQLGFKTVCIEKNETLGGTCLNVGCIPSKALLNNSHYYHMAHGKDFASRGIEMSEVRLNLDKMMEQKSTAVKALTGGIAHLFKQNKVVHVNGYGKITGKNQVTATKADGGTQVIDTKNILIATGSEVTPFPGITIDEDTIVSSTGALSLKKVPEKMVVIGAGVIGVELGSVWQRLGADVTAVEFLGHVGGVGIDMEISKNFQRILQKQGFKFKLNTKVTGATKKSDGKIDVSIEAASGGKAEVITCDVLLVCIGRRPFTKNLGLEELGIELDPRGRIPVNTRFQTKIPNIYAIGDVVAGPMLAHKAEDEGIICVEGMAGGAVHIDYNCVPSVIYTHPEVAWVGKSEEQLKEEGIEYKVGKFPFAANSRAKTNADTDGMVKILGQKSTDRVLGAHILGPGAGEMVNEAALALEYGASCEDIARVCHAHPTLSEAFREANLAASFGKSINF.

The N-terminal 35 residues, 1–35 (MQSWSRVYCSLAKRGHFNRISHGLQGLSAVPLRTY), are a transit peptide targeting the mitochondrion. The residue at position 66 (K66) is an N6-acetyllysine; alternate. N6-succinyllysine; alternate is present on K66. FAD is bound by residues 71–80 (EKNETLGGTC) and K89. A disulfide bridge connects residues C80 and C85. An N6-acetyllysine; alternate mark is found at K104, K122, K132, and K143. 4 positions are modified to N6-succinyllysine; alternate: K104, K122, K132, and K143. G154 lines the FAD pocket. An N6-succinyllysine mark is found at K159 and K166. 183 to 185 (TGS) contributes to the FAD binding site. Residues 220 to 227 (GAGVIGVE) and E243 each bind NAD(+). An N6-succinyllysine mark is found at K273 and K277. V278 is an NAD(+) binding site. Residues S285 and S297 each carry the phosphoserine modification. G314 is an NAD(+) binding site. Position 346 is an N6-acetyllysine (K346). FAD-binding positions include D355 and 361–364 (MLAH). K410 is modified (N6-acetyllysine; alternate). The residue at position 410 (K410) is an N6-succinyllysine; alternate. 2 positions are modified to N6-acetyllysine: K417 and K420. Position 430 is an N6-succinyllysine (K430). H487 acts as the Proton acceptor in catalysis. S502 is subject to Phosphoserine. K505 carries the post-translational modification N6-acetyllysine; alternate. K505 carries the post-translational modification N6-succinyllysine; alternate.

Belongs to the class-I pyridine nucleotide-disulfide oxidoreductase family. As to quaternary structure, homodimer. Part of the multimeric pyruvate dehydrogenase complex that contains multiple copies of pyruvate dehydrogenase (subunits PDHA (PDHA1 or PDHA2) and PDHB, E1), dihydrolipoamide acetyltransferase (DLAT, E2) and lipoamide dehydrogenase (DLD, E3). These subunits are bound to an inner core composed of about 48 DLAT and 12 PDHX molecules (by non covalent bonds). The 2-oxoglutarate dehydrogenase complex is composed of OGDH (2-oxoglutarate dehydrogenase; E1), DLST (dihydrolipoamide succinyltransferase; E2), DLD (dihydrolipoamide dehydrogenase; E3) and the assembly factor KGD4. It contains multiple copies of the three enzymatic components (E1, E2 and E3). In the nucleus, the 2-oxoglutarate dehydrogenase complex associates with KAT2A. Interacts with PDHX. It depends on FAD as a cofactor. In terms of processing, tyrosine phosphorylated.

The protein localises to the mitochondrion matrix. Its subcellular location is the nucleus. The protein resides in the cell projection. It localises to the cilium. It is found in the flagellum. The protein localises to the cytoplasmic vesicle. Its subcellular location is the secretory vesicle. The protein resides in the acrosome. The enzyme catalyses N(6)-[(R)-dihydrolipoyl]-L-lysyl-[protein] + NAD(+) = N(6)-[(R)-lipoyl]-L-lysyl-[protein] + NADH + H(+). Disruption of native heterodimer state inhibits primary dihydrolipoamide dehydrogenase activity and induces serine protease activity. Functionally, lipoamide dehydrogenase is a component of the glycine cleavage system as well as an E3 component of three alpha-ketoacid dehydrogenase complexes (pyruvate-, alpha-ketoglutarate-, and branched-chain amino acid-dehydrogenase complex). The 2-oxoglutarate dehydrogenase complex is mainly active in the mitochondrion. A fraction of the 2-oxoglutarate dehydrogenase complex also localizes in the nucleus and is required for lysine succinylation of histones: associates with KAT2A on chromatin and provides succinyl-CoA to histone succinyltransferase KAT2A. In monomeric form may have additional moonlighting function as serine protease. Involved in the hyperactivation of spermatazoa during capacitation and in the spermatazoal acrosome reaction. This Homo sapiens (Human) protein is Dihydrolipoyl dehydrogenase, mitochondrial (DLD).